The primary structure comprises 195 residues: 3-isopropylmalate dehydratase small subunit (195 aa).

It belongs to the LeuD family. LeuD type 1 subfamily. Heterodimer of LeuC and LeuD.

The enzyme catalyses (2R,3S)-3-isopropylmalate = (2S)-2-isopropylmalate. It participates in amino-acid biosynthesis; L-leucine biosynthesis; L-leucine from 3-methyl-2-oxobutanoate: step 2/4. Functionally, catalyzes the isomerization between 2-isopropylmalate and 3-isopropylmalate, via the formation of 2-isopropylmaleate. This is 3-isopropylmalate dehydratase small subunit from Parafrankia sp. (strain EAN1pec).